Consider the following 352-residue polypeptide: Molybdenum import ATP-binding protein ModC (352 aa).

Positions 1 to 229 constitute an ABC transporter domain; the sequence is MLELNFSQTL…SVMNPWLPKE (229 aa). 31 to 38 contacts ATP; it reads GVSGAGKT. Residues 289–352 enclose the Mop domain; it reads QTSIRNVLRA…AQIKSVSITA (64 aa).

This sequence belongs to the ABC transporter superfamily. Molybdate importer (TC 3.A.1.8) family. In terms of assembly, the complex is composed of two ATP-binding proteins (ModC), two transmembrane proteins (ModB) and a solute-binding protein (ModA).

The protein localises to the cell inner membrane. It carries out the reaction molybdate(out) + ATP + H2O = molybdate(in) + ADP + phosphate + H(+). Functionally, part of the ABC transporter complex ModABC involved in molybdenum import. Responsible for energy coupling to the transport system. The sequence is that of Molybdenum import ATP-binding protein ModC from Escherichia coli O6:H1 (strain CFT073 / ATCC 700928 / UPEC).